The following is a 143-amino-acid chain: Large ribosomal subunit protein uL11 (143 aa).

This sequence belongs to the universal ribosomal protein uL11 family. Part of the ribosomal stalk of the 50S ribosomal subunit. Interacts with L10 and the large rRNA to form the base of the stalk. L10 forms an elongated spine to which L12 dimers bind in a sequential fashion forming a multimeric L10(L12)X complex. One or more lysine residues are methylated.

Functionally, forms part of the ribosomal stalk which helps the ribosome interact with GTP-bound translation factors. The chain is Large ribosomal subunit protein uL11 from Bifidobacterium adolescentis (strain ATCC 15703 / DSM 20083 / NCTC 11814 / E194a).